The following is a 351-amino-acid chain: DNA polymerase IV (351 aa).

The region spanning 4-185 (IIHVDMDCFF…LPLAKIPGVG (182 aa)) is the UmuC domain. Positions 8 and 103 each coordinate Mg(2+). E104 is a catalytic residue.

This sequence belongs to the DNA polymerase type-Y family. As to quaternary structure, monomer. The cofactor is Mg(2+).

It localises to the cytoplasm. The catalysed reaction is DNA(n) + a 2'-deoxyribonucleoside 5'-triphosphate = DNA(n+1) + diphosphate. Poorly processive, error-prone DNA polymerase involved in untargeted mutagenesis. Copies undamaged DNA at stalled replication forks, which arise in vivo from mismatched or misaligned primer ends. These misaligned primers can be extended by PolIV. Exhibits no 3'-5' exonuclease (proofreading) activity. May be involved in translesional synthesis, in conjunction with the beta clamp from PolIII. The chain is DNA polymerase IV from Salmonella paratyphi B (strain ATCC BAA-1250 / SPB7).